Consider the following 643-residue polypeptide: Threonine--tRNA ligase (643 aa).

The TGS domain maps to 1–61; the sequence is MPIITLPDGS…SEDSSLEIIT (61 aa). The tract at residues 243 to 534 is catalytic; that stretch reads DHRRIGKALD…ITEEYAGFFP (292 aa). 3 residues coordinate Zn(2+): Cys334, His385, and His511.

Belongs to the class-II aminoacyl-tRNA synthetase family. Homodimer. The cofactor is Zn(2+).

It localises to the cytoplasm. The enzyme catalyses tRNA(Thr) + L-threonine + ATP = L-threonyl-tRNA(Thr) + AMP + diphosphate + H(+). Its function is as follows. Catalyzes the attachment of threonine to tRNA(Thr) in a two-step reaction: L-threonine is first activated by ATP to form Thr-AMP and then transferred to the acceptor end of tRNA(Thr). Also edits incorrectly charged L-seryl-tRNA(Thr). The protein is Threonine--tRNA ligase of Actinobacillus pleuropneumoniae serotype 5b (strain L20).